A 189-amino-acid polypeptide reads, in one-letter code: Transcription factor FapR (189 aa).

Belongs to the FapR family.

Functionally, transcriptional factor involved in regulation of membrane lipid biosynthesis by repressing genes involved in fatty acid and phospholipid metabolism. The sequence is that of Transcription factor FapR from Listeria monocytogenes serotype 4a (strain HCC23).